We begin with the raw amino-acid sequence, 512 residues long: SNF1-related protein kinase catalytic subunit alpha KIN11 (512 aa).

The Protein kinase domain occupies 20 to 272 (YKLGKTLGIG…IPEIRQHRWF (253 aa)). ATP is bound by residues 26–34 (LGIGSFGKV) and lysine 49. The Proton acceptor role is filled by aspartate 143. The residue at position 165 (serine 165) is a Phosphoserine. Residue threonine 176 is modified to Phosphothreonine; by GRIK1 or GRIK2. Residues 291–391 (AKKINEEIVQ…GARSQVPVDR (101 aa)) form an auto-inhibitory domain (AID) region. The 41-residue stretch at 293–333 (KINEEIVQEVVNMGFDRNQVLESLRNRTQNDATVTYYLLLD) folds into the UBA domain. Positions 295–512 (NEEIVQEVVN…AAFLTELRVI (218 aa)) are regulatory domain (RD). The segment at 392–512 (KWALGLQSHA…AAFLTELRVI (121 aa)) is PPI. The tract at residues 399-512 (SHAHPREIMN…AAFLTELRVI (114 aa)) is interaction with PAD1 and SKP1. One can recognise a KA1 domain in the interval 463–511 (AMTSPTVIKFELQLYKAREEKYLLDIQRVNGPQFLFLDLCAAFLTELRV).

This sequence belongs to the protein kinase superfamily. CAMK Ser/Thr protein kinase family. SNF1 subfamily. As to quaternary structure, subunit of a probable heterotrimeric complex consisting of an alpha catalytic (KIN10 or KIN11) subunit, and a beta (KINB) and a gamma (KING or SNF4) non-catalytic regulatory subunits. Interacts with KINB2, KINB3, SNF4 and probably with KINB1 and KING1. Interacts with SKP1/ASK1, PAD1 and the N-terminus of PRL1. Potential subunit of a SCF ubiquitin ligase complex consisting of a SNF1-related protein kinase, SKP1 and CUL1. The association of the SCF complex with the proteasome may be mediated by PAD1 and seems to be inhibited by the interaction with PRL1. Interacts with DSP4. Interacts with the begomovirus AL2 protein and the curtovirus L2 protein. Interacts with ATAF1. Interacts with CIPK14. Interacts with FLZ proteins through their FLZ-type zinc finger domains. Interacts with GEBP/STKR1. Interacts with REM4.1 and REM4.2. Interacts with ADK2. Interacts with IDD8. Interacts with FLZ3, FLZ9, TCP3, TCP13, HB21/ZHD3 and HB23/ZHD10. Interacts with WRI1. Interacts with IPK2b. Interacts with FLZ6 and FLZ10. Sumoylated by SIZ1. In terms of processing, phosphorylated at Thr-176 under submergence. Autophosphorylated. Phosphorylated at Thr-176 by GRIK1/SNAK2 and GRIK2/SNAK1. Expressed in roots, shoots, flower buds, flowers, siliques and leaves. Restrictly expressed to the base of the leaf, the vascular tissue, and the hydathodes.

The protein localises to the plastid. It is found in the chloroplast. It localises to the cytoplasm. The protein resides in the endoplasmic reticulum. It catalyses the reaction L-seryl-[protein] + ATP = O-phospho-L-seryl-[protein] + ADP + H(+). It carries out the reaction L-threonyl-[protein] + ATP = O-phospho-L-threonyl-[protein] + ADP + H(+). Its activity is regulated as follows. Inactivated by the begomovirus AL2 protein or the curtovirus L2 protein. Activated by phosphorylation at Thr-176 by GRIK1/SNAK2 and GRIK2/SNAK1. Inhibited by trehalose-6-phosphate. Its function is as follows. Catalytic subunit of the probable trimeric SNF1-related protein kinase (SnRK) complex, a central regulator of cellular energy homeostasis, which, in response to seemingly unrelated darkness, sugar and stress conditions, activates energy-producing pathways and inhibits energy-consuming processes. May play a role in a signal transduction cascade regulating gene expression and carbohydrate metabolism in higher plants. The SnRK complex may also be involved in the regulation of fatty acid synthesis by phosphorylation of acetyl-CoA carboxylase and in assimilation of nitrogen by phosphorylating nitrate reductase. In vitro, KIN11 exhibits kinase activity on sucrose phosphate synthase and the kinase activity is inhibited by PRL1. May be a subunit of a SCF ubiquitin ligase complex and thus be involved in proteasomal ubiquitination. Involved in innate antiviral defenses. Phosphorylates REM4.1 in vitro. Phosphorylates ADK2 in vitro. This chain is SNF1-related protein kinase catalytic subunit alpha KIN11, found in Arabidopsis thaliana (Mouse-ear cress).